A 172-amino-acid polypeptide reads, in one-letter code: Cell division protein SepF (172 aa).

Residues 18 to 73 (RRYDEEDLPDEELTTEVYSDDGYEPSSEVTQLHHHDSNEQHARGHKAVQHRRRSEL) form a disordered region. The segment covering 22–40 (EEDLPDEELTTEVYSDDGY) has biased composition (acidic residues). Over residues 48–59 (QLHHHDSNEQHA) the composition is skewed to basic and acidic residues. Residues 60-70 (RGHKAVQHRRR) show a composition bias toward basic residues.

Belongs to the SepF family. As to quaternary structure, homodimer. Interacts with FtsZ.

Its subcellular location is the cytoplasm. In terms of biological role, cell division protein that is part of the divisome complex and is recruited early to the Z-ring. Probably stimulates Z-ring formation, perhaps through the cross-linking of FtsZ protofilaments. Its function overlaps with FtsA. This chain is Cell division protein SepF, found in Cutibacterium acnes (strain DSM 16379 / KPA171202) (Propionibacterium acnes).